We begin with the raw amino-acid sequence, 289 residues long: Rhodopsin (289 aa).

At Y1–A7 the chain is on the extracellular side. Residues Y8 to V32 traverse the membrane as a helical segment. At T33–N44 the chain is on the cytoplasmic side. The helical transmembrane segment at Y45–Y67 threads the bilayer. Residues T68 to C81 are Extracellular-facing. Cysteines 81 and 158 form a disulfide. The helical transmembrane segment at N82 to I104 threads the bilayer. The 'Ionic lock' involved in activated form stabilization signature appears at E105–W107. The Cytoplasmic portion of the chain corresponds to E105–H123. Residues A124 to V144 traverse the membrane as a helical segment. Residues G145–S173 lie on the Extracellular side of the membrane. N-linked (GlcNAc...) asparagine glycosylation occurs at N171. A helical transmembrane segment spans residues F174 to G195. At R196–R223 the chain is on the cytoplasmic side. The helical transmembrane segment at M224–Y245 threads the bilayer. The Extracellular portion of the chain corresponds to I246–I257. The chain crosses the membrane as a helical span at residues F258–C279. N6-(retinylidene)lysine is present on K267. At M280–I289 the chain is on the cytoplasmic side.

It belongs to the G-protein coupled receptor 1 family. Opsin subfamily. Phosphorylated on some or all of the serine and threonine residues present in the C-terminal region. Post-translationally, contains one covalently linked retinal chromophore.

It localises to the membrane. Its subcellular location is the cell projection. The protein localises to the cilium. It is found in the photoreceptor outer segment. Photoreceptor required for image-forming vision at low light intensity. While most salt water fish species use retinal as chromophore, most freshwater fish use 3-dehydroretinal, or a mixture of retinal and 3-dehydroretinal. Light-induced isomerization of 11-cis to all-trans retinal triggers a conformational change that activates signaling via G-proteins. Subsequent receptor phosphorylation mediates displacement of the bound G-protein alpha subunit by arrestin and terminates signaling. The chain is Rhodopsin (rho) from Cottocomephorus grewingkii (Baikal yellowfin).